Reading from the N-terminus, the 158-residue chain is Regulator of G-protein signaling 13 (158 aa).

Residues 34–150 (SLESLMATKY…LKSEMYQQLL (117 aa)) form the RGS domain.

Functionally, inhibits signal transduction by increasing the GTPase activity of G protein alpha subunits thereby driving them into their inactive GDP-bound form. Binds to both G(i)-alpha and G(q)-alpha. This chain is Regulator of G-protein signaling 13 (Rgs13), found in Mus musculus (Mouse).